The chain runs to 398 residues: Acetate kinase (398 aa).

Residue asparagine 9 participates in Mg(2+) binding. ATP is bound at residue lysine 16. Arginine 93 is a substrate binding site. Aspartate 150 serves as the catalytic Proton donor/acceptor. ATP-binding positions include 209-213 (HLGAG), 284-286 (DMR), and 329-333 (GIGEH). Residue glutamate 382 participates in Mg(2+) binding.

Belongs to the acetokinase family. As to quaternary structure, homodimer. Mg(2+) serves as cofactor. It depends on Mn(2+) as a cofactor.

Its subcellular location is the cytoplasm. The catalysed reaction is acetate + ATP = acetyl phosphate + ADP. The protein operates within metabolic intermediate biosynthesis; acetyl-CoA biosynthesis; acetyl-CoA from acetate: step 1/2. Its function is as follows. Catalyzes the formation of acetyl phosphate from acetate and ATP. Can also catalyze the reverse reaction. This Rhodopseudomonas palustris (strain TIE-1) protein is Acetate kinase.